The chain runs to 179 residues: Fas apoptotic inhibitory molecule 1 (179 aa).

Threonine 2 is subject to N-acetylthreonine.

It belongs to the FAIM1 family.

The protein localises to the cytoplasm. In terms of biological role, plays a role as an inducible effector molecule that mediates Fas resistance produced by surface Ig engagement in B cells. This Homo sapiens (Human) protein is Fas apoptotic inhibitory molecule 1 (FAIM).